The sequence spans 224 residues: Flagellar L-ring protein (224 aa).

A signal peptide spans 1–15; sequence MARYLVLAVALLLAA. Cys-16 carries N-palmitoyl cysteine lipidation. A lipid anchor (S-diacylglycerol cysteine) is attached at Cys-16.

It belongs to the FlgH family. In terms of assembly, the basal body constitutes a major portion of the flagellar organelle and consists of four rings (L,P,S, and M) mounted on a central rod.

Its subcellular location is the cell outer membrane. It localises to the bacterial flagellum basal body. Its function is as follows. Assembles around the rod to form the L-ring and probably protects the motor/basal body from shearing forces during rotation. The polypeptide is Flagellar L-ring protein (Shewanella baltica (strain OS223)).